Consider the following 112-residue polypeptide: UPF0482 protein SG1468 (112 aa).

An N-terminal signal peptide occupies residues 1–22; sequence MNTIPTRCLLGGLLALSLLAYA.

The protein belongs to the UPF0482 family.

In Sodalis glossinidius (strain morsitans), this protein is UPF0482 protein SG1468.